Consider the following 397-residue polypeptide: Argininosuccinate synthase (397 aa).

Ala9–Ser17 contributes to the ATP binding site. Tyr87 contributes to the L-citrulline binding site. Gly117 contributes to the ATP binding site. 3 residues coordinate L-aspartate: Thr119, Asn123, and Asp124. Asn123 is an L-citrulline binding site. Arg127, Ser175, Ser184, Glu257, and Tyr269 together coordinate L-citrulline.

This sequence belongs to the argininosuccinate synthase family. Type 1 subfamily. Homotetramer.

The protein resides in the cytoplasm. It carries out the reaction L-citrulline + L-aspartate + ATP = 2-(N(omega)-L-arginino)succinate + AMP + diphosphate + H(+). It functions in the pathway amino-acid biosynthesis; L-arginine biosynthesis; L-arginine from L-ornithine and carbamoyl phosphate: step 2/3. The sequence is that of Argininosuccinate synthase from Dictyoglomus turgidum (strain DSM 6724 / Z-1310).